A 634-amino-acid polypeptide reads, in one-letter code: Chaperone protein HtpG (634 aa).

Positions 1-342 are a; substrate-binding; sequence MSVETQKETL…SNDLSLNVSR (342 aa). Positions 343–559 are b; the sequence is EILQKDPVID…EQDLGLQMRQ (217 aa). The tract at residues 560–634 is c; sequence ILEASGQKVP…LNKLLVELSA (75 aa).

It belongs to the heat shock protein 90 family. As to quaternary structure, homodimer.

The protein localises to the cytoplasm. Functionally, molecular chaperone. Has ATPase activity. In Pseudomonas paraeruginosa (strain DSM 24068 / PA7) (Pseudomonas aeruginosa (strain PA7)), this protein is Chaperone protein HtpG.